Consider the following 417-residue polypeptide: UDP-N-acetylglucosamine 1-carboxyvinyltransferase (417 aa).

22–23 (KN) contributes to the phosphoenolpyruvate binding site. A UDP-N-acetyl-alpha-D-glucosamine-binding site is contributed by R91. C115 serves as the catalytic Proton donor. Position 115 is a 2-(S-cysteinyl)pyruvic acid O-phosphothioketal (C115). Residues 120 to 124 (RPVDL), D304, and I326 each bind UDP-N-acetyl-alpha-D-glucosamine.

This sequence belongs to the EPSP synthase family. MurA subfamily.

It localises to the cytoplasm. It catalyses the reaction phosphoenolpyruvate + UDP-N-acetyl-alpha-D-glucosamine = UDP-N-acetyl-3-O-(1-carboxyvinyl)-alpha-D-glucosamine + phosphate. It functions in the pathway cell wall biogenesis; peptidoglycan biosynthesis. Functionally, cell wall formation. Adds enolpyruvyl to UDP-N-acetylglucosamine. The protein is UDP-N-acetylglucosamine 1-carboxyvinyltransferase of Nitratidesulfovibrio vulgaris (strain ATCC 29579 / DSM 644 / CCUG 34227 / NCIMB 8303 / VKM B-1760 / Hildenborough) (Desulfovibrio vulgaris).